A 203-amino-acid polypeptide reads, in one-letter code: Recombination protein RecR (203 aa).

A C4-type zinc finger spans residues 58-73 (CDYCGNLDIVSICNIC). In terms of domain architecture, Toprim spans 81–177 (STIAVVESVA…KISKLASGIP (97 aa)).

Belongs to the RecR family.

In terms of biological role, may play a role in DNA repair. It seems to be involved in an RecBC-independent recombinational process of DNA repair. It may act with RecF and RecO. This is Recombination protein RecR from Orientia tsutsugamushi (strain Ikeda) (Rickettsia tsutsugamushi).